A 406-amino-acid chain; its full sequence is Subtilisin-like protease CPC735_023170 (406 aa).

Residues 1 to 20 (MRLFQSTCVLVGTVLPLFTA) form the signal peptide. Residues 21 to 118 (FPISSPREIE…VEPDSMAYVT (98 aa)) constitute a propeptide that is removed on maturation. Residues 35-115 (KYIITFKKGI…VESVEPDSMA (81 aa)) form the Inhibitor I9 domain. An N-linked (GlcNAc...) asparagine glycan is attached at N125. The region spanning 127 to 406 (TYGPRRISHR…NKLAYNGSGK (280 aa)) is the Peptidase S8 domain. Catalysis depends on charge relay system residues D161 and H192. N239 carries an N-linked (GlcNAc...) asparagine glycan. The tract at residues 283 to 309 (NDGRDAGRNSPGSAPESITVGSINSRR) is disordered. N-linked (GlcNAc...) asparagine glycosylation is present at N346. S351 (charge relay system) is an active-site residue. N402 carries an N-linked (GlcNAc...) asparagine glycan.

It belongs to the peptidase S8 family.

The protein localises to the secreted. Its function is as follows. Secreted subtilisin-like serine protease with keratinolytic activity that contributes to pathogenicity. This chain is Subtilisin-like protease CPC735_023170, found in Coccidioides posadasii (strain C735) (Valley fever fungus).